We begin with the raw amino-acid sequence, 76 residues long: uncharacterized protein (76 aa).

Residues 15 to 69 (VRIVRKEQNLRQDELAGVAGVGLRFIVDLEAGKPTAQIGKVLQVLQTLGCSIDIL) form the HTH cro/C1-type domain. Residues 26 to 45 (QDELAGVAGVGLRFIVDLEA) constitute a DNA-binding region (H-T-H motif).

This is an uncharacterized protein from Sinorhizobium fredii (strain NBRC 101917 / NGR234).